The following is a 192-amino-acid chain: Xanthine phosphoribosyltransferase (192 aa).

The xanthine site is built by Leu20 and Asn27. 128–132 (AQGEA) provides a ligand contact to 5-phospho-alpha-D-ribose 1-diphosphate. Residue Lys156 coordinates xanthine.

Belongs to the purine/pyrimidine phosphoribosyltransferase family. Xpt subfamily. Homodimer.

It localises to the cytoplasm. The enzyme catalyses XMP + diphosphate = xanthine + 5-phospho-alpha-D-ribose 1-diphosphate. The protein operates within purine metabolism; XMP biosynthesis via salvage pathway; XMP from xanthine: step 1/1. Functionally, converts the preformed base xanthine, a product of nucleic acid breakdown, to xanthosine 5'-monophosphate (XMP), so it can be reused for RNA or DNA synthesis. This chain is Xanthine phosphoribosyltransferase, found in Lactobacillus helveticus (strain DPC 4571).